Reading from the N-terminus, the 463-residue chain is Cysteine--tRNA ligase (463 aa).

A Zn(2+)-binding site is contributed by Cys-28. Residues 30–40 carry the 'HIGH' region motif; sequence VTIYDLCHIGH. 3 residues coordinate Zn(2+): Cys-209, His-234, and Glu-238. A 'KMSKS' region motif is present at residues 266 to 270; sequence KMSKS. An ATP-binding site is contributed by Lys-269.

This sequence belongs to the class-I aminoacyl-tRNA synthetase family. As to quaternary structure, monomer. Requires Zn(2+) as cofactor.

The protein localises to the cytoplasm. It catalyses the reaction tRNA(Cys) + L-cysteine + ATP = L-cysteinyl-tRNA(Cys) + AMP + diphosphate. The sequence is that of Cysteine--tRNA ligase from Tolumonas auensis (strain DSM 9187 / NBRC 110442 / TA 4).